A 323-amino-acid polypeptide reads, in one-letter code: CD-NTase-associated protein 12 (323 aa).

A TIR domain is found at 4–120; it reads RIFIGSSSEQ…LDGITVAKFT (117 aa). E84 is an active-site residue. Residues 154-323 form an STING domain region; the sequence is STALAIGYYN…YVNVLTNVKL (170 aa). 7 residues coordinate 3',3'-c-di-GMP: S164, F165, R234, P237, D259, S262, and T263.

This sequence in the C-terminal section; belongs to the bacterial STING family. Forms homodimers which subsequently form filaments. In vitro in the presence of c-di-GMP forms filaments up to 300 nm in length with an ordered array of parallel-stacked subunits, where the TIR domains form one face of the filament and the STING domains form the other face. Antiparallel double-filament structures are also seen. 3'3'-cGAMP weakly induces filament formation, while 2'3'-cGAMP does not.

The enzyme catalyses NAD(+) + H2O = ADP-D-ribose + nicotinamide + H(+). NAD(+) hydrolase activity is strongly stimulated by c-di-GMP, weakly by 3'3'-cGAMP, very weakly by c-di-AMP and not at all by 2'3'-cGAMP. Self-association of TIR domains is required for NADase activity. Functionally, effector protein of a CBASS antiviral system with NAD(+) hydrolase activity. CBASS (cyclic oligonucleotide-based antiphage signaling system) provides immunity against bacteriophage. The CD-NTase protein synthesizes cyclic nucleotides in response to infection; these serve as specific second messenger signals. The signals activate a diverse range of effectors, leading to bacterial cell death and thus abortive phage infection. A type I-D(GG) CBASS system. Its function is as follows. Upon activation by 3'3'-c-di-GMP forms filaments which hydrolyze NAD(+); filament formation is required for enzyme activation. Induction in an E.coli strain that synthesizes c-di-GMP leads to significant growth inhibition. Binds c-di-GMP and 3'3'-cGAMP (3'3'-cyclic GMP-AMP), but not c-di-AMP, 2'3'-cGAMP or cUMP-AMP. This Sphingobacterium faecium (strain DSM 11690 / JCM 21820 / NBRC 15299 / NCIMB 13408 / KS 0470) protein is CD-NTase-associated protein 12.